Here is a 466-residue protein sequence, read N- to C-terminus: UDP-N-acetylmuramoylalanine--D-glutamate ligase (466 aa).

121–127 is an ATP binding site; that stretch reads GTNGKST.

The protein belongs to the MurCDEF family.

Its subcellular location is the cytoplasm. It catalyses the reaction UDP-N-acetyl-alpha-D-muramoyl-L-alanine + D-glutamate + ATP = UDP-N-acetyl-alpha-D-muramoyl-L-alanyl-D-glutamate + ADP + phosphate + H(+). Its pathway is cell wall biogenesis; peptidoglycan biosynthesis. In terms of biological role, cell wall formation. Catalyzes the addition of glutamate to the nucleotide precursor UDP-N-acetylmuramoyl-L-alanine (UMA). This Nitrobacter hamburgensis (strain DSM 10229 / NCIMB 13809 / X14) protein is UDP-N-acetylmuramoylalanine--D-glutamate ligase.